A 502-amino-acid polypeptide reads, in one-letter code: Glycerol kinase (502 aa).

Thr-14 provides a ligand contact to ADP. Thr-14, Thr-15, and Ser-16 together coordinate ATP. Position 14 (Thr-14) interacts with sn-glycerol 3-phosphate. Arg-18 serves as a coordination point for ADP. The sn-glycerol 3-phosphate site is built by Arg-84, Glu-85, Tyr-136, and Asp-246. Residues Arg-84, Glu-85, Tyr-136, Asp-246, and Gln-247 each contribute to the glycerol site. Positions 268 and 311 each coordinate ADP. The ATP site is built by Thr-268, Gly-311, Gln-315, and Gly-412. ADP contacts are provided by Gly-412 and Asn-416.

Belongs to the FGGY kinase family. As to quaternary structure, homotetramer and homodimer (in equilibrium). Heterodimer with EIIA-Glc. Binds 1 zinc ion per glycerol kinase EIIA-Glc dimer. The zinc ion is important for dimerization.

It catalyses the reaction glycerol + ATP = sn-glycerol 3-phosphate + ADP + H(+). Its pathway is polyol metabolism; glycerol degradation via glycerol kinase pathway; sn-glycerol 3-phosphate from glycerol: step 1/1. With respect to regulation, activity of this regulatory enzyme is affected by several metabolites. Allosterically and non-competitively inhibited by fructose 1,6-bisphosphate (FBP) and unphosphorylated phosphocarrier protein EIIA-Glc (III-Glc), an integral component of the bacterial phosphotransferase (PTS) system. Functionally, key enzyme in the regulation of glycerol uptake and metabolism. Catalyzes the phosphorylation of glycerol to yield sn-glycerol 3-phosphate. This Shigella flexneri protein is Glycerol kinase.